The chain runs to 361 residues: Phenylalanine--tRNA ligase alpha subunit (361 aa).

A Mg(2+)-binding site is contributed by glutamate 260.

The protein belongs to the class-II aminoacyl-tRNA synthetase family. Phe-tRNA synthetase alpha subunit type 1 subfamily. Tetramer of two alpha and two beta subunits. The cofactor is Mg(2+).

The protein localises to the cytoplasm. The enzyme catalyses tRNA(Phe) + L-phenylalanine + ATP = L-phenylalanyl-tRNA(Phe) + AMP + diphosphate + H(+). This Chelativorans sp. (strain BNC1) protein is Phenylalanine--tRNA ligase alpha subunit.